A 648-amino-acid polypeptide reads, in one-letter code: Macrolide export ATP-binding/permease protein MacB (648 aa).

The 239-residue stretch at 5-243 (LELKDIRRSY…TGGTEPVVNT (239 aa)) folds into the ABC transporter domain. Position 41–48 (41–48 (GASGSGKS)) interacts with ATP. 4 helical membrane-spanning segments follow: residues 273 to 293 (LLTM…VVVG), 523 to 543 (LFLT…VMNI), 576 to 596 (AVLV…LIAF), and 611 to 631 (PLAL…FGWL).

It belongs to the ABC transporter superfamily. Macrolide exporter (TC 3.A.1.122) family. Homodimer. Part of the tripartite efflux system MacAB-TolC, which is composed of an inner membrane transporter, MacB, a periplasmic membrane fusion protein, MacA, and an outer membrane component, TolC. The complex forms a large protein conduit and can translocate molecules across both the inner and outer membranes. Interacts with MacA.

It localises to the cell inner membrane. In terms of biological role, part of the tripartite efflux system MacAB-TolC. MacB is a non-canonical ABC transporter that contains transmembrane domains (TMD), which form a pore in the inner membrane, and an ATP-binding domain (NBD), which is responsible for energy generation. Confers resistance against macrolides. The protein is Macrolide export ATP-binding/permease protein MacB of Escherichia coli O6:K15:H31 (strain 536 / UPEC).